Here is a 387-residue protein sequence, read N- to C-terminus: Chaperone protein DnaJ (387 aa).

Residues 4-68 (DFYDVLGVSR…EKRQMYDQLG (65 aa)) form the J domain. The segment at 76–135 (EKRGGVGGGGNSSGGSARGDPFGGMGGQGSPFGDIFEQFFGGGQGQRRQGNRPRQGQNLQ) is disordered. Gly residues predominate over residues 80–105 (GVGGGGNSSGGSARGDPFGGMGGQGS). Residues 121–133 (QRRQGNRPRQGQN) are compositionally biased toward low complexity. A CR-type zinc finger spans residues 148–230 (GVEKQFTVRR…CNGDGVTRQE (83 aa)). Residues Cys-161, Cys-164, Cys-178, Cys-181, Cys-204, Cys-207, Cys-218, and Cys-221 each contribute to the Zn(2+) site. CXXCXGXG motif repeat units follow at residues 161–168 (CPDCNGRG), 178–185 (CPQCNGQG), 204–211 (CPRCDGSG), and 218–225 (CSTCNGDG).

It belongs to the DnaJ family. In terms of assembly, homodimer. It depends on Zn(2+) as a cofactor.

The protein resides in the cytoplasm. Functionally, participates actively in the response to hyperosmotic and heat shock by preventing the aggregation of stress-denatured proteins and by disaggregating proteins, also in an autonomous, DnaK-independent fashion. Unfolded proteins bind initially to DnaJ; upon interaction with the DnaJ-bound protein, DnaK hydrolyzes its bound ATP, resulting in the formation of a stable complex. GrpE releases ADP from DnaK; ATP binding to DnaK triggers the release of the substrate protein, thus completing the reaction cycle. Several rounds of ATP-dependent interactions between DnaJ, DnaK and GrpE are required for fully efficient folding. Also involved, together with DnaK and GrpE, in the DNA replication of plasmids through activation of initiation proteins. The sequence is that of Chaperone protein DnaJ from Haloquadratum walsbyi (strain DSM 16790 / HBSQ001).